The primary structure comprises 397 residues: Putative F-box protein At2g04810 (397 aa).

An F-box domain is found at Ser-20–Leu-68.

The polypeptide is Putative F-box protein At2g04810 (Arabidopsis thaliana (Mouse-ear cress)).